The sequence spans 175 residues: Auxin-responsive protein IAA28 (175 aa).

Positions M1–L39 are disordered. Residues L7–L11 carry the EAR-like (transcriptional repression) motif. The span at Q17–L39 shows a compositional bias: polar residues. One can recognise a PB1 domain in the interval E80–T161.

This sequence belongs to the Aux/IAA family. In terms of assembly, homodimers and heterodimers. Interacts with TPL. In terms of tissue distribution, in roots and inflorescence stems.

The protein localises to the nucleus. Aux/IAA proteins are short-lived transcriptional factors that function as repressors of early auxin response genes at low auxin concentrations. Repression is thought to result from the interaction with auxin response factors (ARFs), proteins that bind to the auxin-responsive promoter element (AuxRE). Formation of heterodimers with ARF proteins may alter their ability to modulate early auxin response genes expression. This Arabidopsis thaliana (Mouse-ear cress) protein is Auxin-responsive protein IAA28 (IAA28).